The following is a 311-amino-acid chain: Bifunctional protein FolD (311 aa).

An NADP(+)-binding site is contributed by Gly-174 to Gly-176.

The protein belongs to the tetrahydrofolate dehydrogenase/cyclohydrolase family. In terms of assembly, homodimer.

The catalysed reaction is (6R)-5,10-methylene-5,6,7,8-tetrahydrofolate + NADP(+) = (6R)-5,10-methenyltetrahydrofolate + NADPH. The enzyme catalyses (6R)-5,10-methenyltetrahydrofolate + H2O = (6R)-10-formyltetrahydrofolate + H(+). It participates in one-carbon metabolism; tetrahydrofolate interconversion. Catalyzes the oxidation of 5,10-methylenetetrahydrofolate to 5,10-methenyltetrahydrofolate and then the hydrolysis of 5,10-methenyltetrahydrofolate to 10-formyltetrahydrofolate. In Pyrobaculum aerophilum (strain ATCC 51768 / DSM 7523 / JCM 9630 / CIP 104966 / NBRC 100827 / IM2), this protein is Bifunctional protein FolD.